The primary structure comprises 642 residues: 2-oxoacid:ferredoxin oxidoreductase 2, subunit alpha (642 aa).

The short motif at 263–267 (YPITP) is the YPITP motif element. 2 residues coordinate substrate: Thr-266 and Arg-356.

As to quaternary structure, heterodimer composed of an alpha and a beta subunit.

The enzyme catalyses a 2-oxocarboxylate + 2 oxidized [2Fe-2S]-[ferredoxin] + CoA = an acyl-CoA + 2 reduced [2Fe-2S]-[ferredoxin] + CO2 + H(+). Its function is as follows. Catalyzes the coenzyme A-dependent oxidative decarboxylation of different 2-oxoacids such as pyruvate, 2-oxobutyrate, glyoxylate and 2-oxoglutarate to form their CoA derivatives. The protein is 2-oxoacid:ferredoxin oxidoreductase 2, subunit alpha of Aeropyrum pernix (strain ATCC 700893 / DSM 11879 / JCM 9820 / NBRC 100138 / K1).